Reading from the N-terminus, the 143-residue chain is Hemoglobin-1 (143 aa).

An N-acetylserine modification is found at Ser2. The region spanning 2–143 (SLSAAQKDNV…ALMGMIRPNM (142 aa)) is the Globin domain. His97 is a heme b binding site.

It belongs to the globin family. In terms of assembly, monomer.

Its subcellular location is the cytoplasm. Functionally, serves to transport hydrogen sulfide to autotrophic bacteria. The protein is Hemoglobin-1 of Phacoides pectinatus (Thick lucine).